The primary structure comprises 358 residues: MFNSFGNIFRLTSFGESHGPGVGGVIDGFPAGIKIDMDFVQQELNRRRPGQSLLTTSRKEPDTVEFLSGIFEGKSTGCPIGFVVWNKNQHSNDYENIKNLFRPSHADYTYMQKYGIRDYRGGGRSSARETISRVVAGALAKLALKQLGISVTAYTSQVGPVKLDKDYKSYNLDLIETNDVRCPDPEKAKEMAELIWKIKGEGDTIGGVVSCVIKGCPIGLGQPVFGKLHAALGNAMLSINAVKGFSYGQGFDSMELKGSEQNDVFYNNNGRVETKSNYSGGIQGGISNGQDIYFRVAFKPVATILMEQHTVNINGTDTTMKAKGRHDACVLPRAVPIVEAMAAMTILDYYLIDRTTQL.

Arginine 47 serves as a coordination point for NADP(+). Residues 124 to 126 (RSS), 240 to 241 (NA), glycine 284, 299 to 303 (KPVAT), and arginine 325 each bind FMN.

This sequence belongs to the chorismate synthase family. In terms of assembly, homotetramer. FMNH2 is required as a cofactor.

It carries out the reaction 5-O-(1-carboxyvinyl)-3-phosphoshikimate = chorismate + phosphate. It functions in the pathway metabolic intermediate biosynthesis; chorismate biosynthesis; chorismate from D-erythrose 4-phosphate and phosphoenolpyruvate: step 7/7. In terms of biological role, catalyzes the anti-1,4-elimination of the C-3 phosphate and the C-6 proR hydrogen from 5-enolpyruvylshikimate-3-phosphate (EPSP) to yield chorismate, which is the branch point compound that serves as the starting substrate for the three terminal pathways of aromatic amino acid biosynthesis. This reaction introduces a second double bond into the aromatic ring system. In Phocaeicola vulgatus (strain ATCC 8482 / DSM 1447 / JCM 5826 / CCUG 4940 / NBRC 14291 / NCTC 11154) (Bacteroides vulgatus), this protein is Chorismate synthase.